A 485-amino-acid polypeptide reads, in one-letter code: ETS translocation variant 4 (485 aa).

Lys-6 is covalently cross-linked (Glycyl lysine isopeptide (Lys-Gly) (interchain with G-Cter in SUMO2)). 2 disordered regions span residues 79–114 and 135–214; these read PDFH…RKPP and IAIK…QHQL. A Glycyl lysine isopeptide (Lys-Gly) (interchain with G-Cter in SUMO) cross-link involves residue Lys-95. A Phosphoserine modification is found at Ser-100. Lys-138 participates in a covalent cross-link: Glycyl lysine isopeptide (Lys-Gly) (interchain with G-Cter in SUMO2). A phosphoserine mark is found at Ser-139 and Ser-148. Positions 158 to 171 are enriched in low complexity; it reads QQQSLLRASSSSQS. The residue at position 215 (Ser-215) is a Phosphoserine. Glycyl lysine isopeptide (Lys-Gly) (interchain with G-Cter in SUMO) cross-links involve residues Lys-227 and Lys-261. Lys-323 participates in a covalent cross-link: Glycyl lysine isopeptide (Lys-Gly) (interchain with G-Cter in SUMO2). Residues 342–422 constitute a DNA-binding region (ETS); it reads LQLWQFLVAL…AGERYVYKFV (81 aa).

The protein belongs to the ETS family. In terms of processing, sumoylated; enhanced upon ERK/MAP kinase pathway activation it positively regulates the transcriptional activator capacity. Sumoylation at Lys-95 probably requires phosphorylation at Ser-100. Transiently polysumoylated and desumoylated by SENP1. Sumoylation is a prerequisite to polyubiquitination which in turn increases proteasomal-mediated degradation. Probably polyubiquitinated by RNF4 and deubiquitinated by USP2. In terms of tissue distribution, epididymis and brain.

Its subcellular location is the nucleus. Functionally, transcriptional activator. May play a role in keratinocyte differentiation. The sequence is that of ETS translocation variant 4 (Etv4) from Mus musculus (Mouse).